We begin with the raw amino-acid sequence, 285 residues long: Protein phosphatase 1 regulatory subunit 3B (285 aa).

Positions 62–65 (RVSF) match the PP1-binding motif motif. The 109-residue stretch at 125–233 (RNRLQADHVC…SNRGKNYRII (109 aa)) folds into the CBM21 domain. Serine 261 carries the post-translational modification Phosphoserine.

In terms of assembly, interacts with glycogen, PPP1CC catalytic subunit of PP1 and PYGL. Associates with glycogen particles. Forms complexes with debranching enzyme, glycogen phosphorylase, glycogen synthase and phosphorylase kinase which is necessary for its regulation of PP1 activity. Highly expressed in the liver and, at lower levels, in skeletal muscle, including in vastus lateralis, gastrocnemius and soleus (at protein level). Highest mRNA levels are observed in skeletal muscle, and only moderate levels in liver and heart. Weak expression in placenta and lung.

Its function is as follows. Acts as a glycogen-targeting subunit for phosphatase PP1. Facilitates interaction of the PP1 with enzymes of the glycogen metabolism and regulates its activity. Suppresses the rate at which PP1 dephosphorylates (inactivates) glycogen phosphorylase and enhances the rate at which it activates glycogen synthase and therefore limits glycogen breakdown. Its activity is inhibited by PYGL, resulting in inhibition of the glycogen synthase and glycogen phosphorylase phosphatase activities of PP1. Dramatically increases basal and insulin-stimulated glycogen synthesis upon overexpression in hepatocytes. This is Protein phosphatase 1 regulatory subunit 3B (PPP1R3B) from Homo sapiens (Human).